Here is a 371-residue protein sequence, read N- to C-terminus: GDP-perosamine synthase (371 aa).

At K186 the chain carries N6-(pyridoxal phosphate)lysine.

The protein belongs to the DegT/DnrJ/EryC1 family. As to quaternary structure, homodimer. Requires pyridoxal 5'-phosphate as cofactor.

The enzyme catalyses GDP-alpha-D-perosamine + 2-oxoglutarate = GDP-4-dehydro-alpha-D-rhamnose + L-glutamate. It functions in the pathway bacterial outer membrane biogenesis; LPS O-antigen biosynthesis. Its function is as follows. Catalyzes the synthesis of GDP-perosamine from GDP-4-keto-6-deoxy-D-mannose and L-glutamate. Can use only L-glutamate as amino donor. In vitro, can also use GDP-4-keto-3,6-dideoxymannose to produce GDP-3-deoxyperosamine. Involved in the formation of S-LPS, which is required for attachment of the protein S-layer to the outer membrane surface. The protein is GDP-perosamine synthase of Caulobacter vibrioides (strain ATCC 19089 / CIP 103742 / CB 15) (Caulobacter crescentus).